Here is a 213-residue protein sequence, read N- to C-terminus: Redox-sensing transcriptional repressor Rex (213 aa).

Positions 18–57 form a DNA-binding region, H-T-H motif; the sequence is LYYRIFKRFHAEKIERANSKQIAEAIGIDSATVRRDFSYF. An NAD(+)-binding site is contributed by 92–97; sequence GIGNMG.

It belongs to the transcriptional regulatory Rex family. Homodimer.

It is found in the cytoplasm. Functionally, modulates transcription in response to changes in cellular NADH/NAD(+) redox state. Binds to the promoter of the aldehyde-alcohol dehydrogenase adhE gene. Functions as a redox-dependent repressor of adhE expression. This Streptococcus pneumoniae serotype 19F (strain G54) protein is Redox-sensing transcriptional repressor Rex.